Reading from the N-terminus, the 268-residue chain is 4-diphosphocytidyl-2-C-methyl-D-erythritol kinase (268 aa).

Residue lysine 10 is part of the active site. 101 to 111 is a binding site for ATP; sequence PTQAGLGGGST. Residue aspartate 143 is part of the active site.

Belongs to the GHMP kinase family. IspE subfamily.

The enzyme catalyses 4-CDP-2-C-methyl-D-erythritol + ATP = 4-CDP-2-C-methyl-D-erythritol 2-phosphate + ADP + H(+). The protein operates within isoprenoid biosynthesis; isopentenyl diphosphate biosynthesis via DXP pathway; isopentenyl diphosphate from 1-deoxy-D-xylulose 5-phosphate: step 3/6. Functionally, catalyzes the phosphorylation of the position 2 hydroxy group of 4-diphosphocytidyl-2C-methyl-D-erythritol. This is 4-diphosphocytidyl-2-C-methyl-D-erythritol kinase from Helicobacter acinonychis (strain Sheeba).